We begin with the raw amino-acid sequence, 122 residues long: Small ribosomal subunit protein uS12 (122 aa).

Asp89 bears the 3-methylthioaspartic acid mark.

This sequence belongs to the universal ribosomal protein uS12 family. In terms of assembly, part of the 30S ribosomal subunit. Contacts proteins S8 and S17. May interact with IF1 in the 30S initiation complex.

Its function is as follows. With S4 and S5 plays an important role in translational accuracy. Interacts with and stabilizes bases of the 16S rRNA that are involved in tRNA selection in the A site and with the mRNA backbone. Located at the interface of the 30S and 50S subunits, it traverses the body of the 30S subunit contacting proteins on the other side and probably holding the rRNA structure together. The combined cluster of proteins S8, S12 and S17 appears to hold together the shoulder and platform of the 30S subunit. This is Small ribosomal subunit protein uS12 from Neorickettsia sennetsu (strain ATCC VR-367 / Miyayama) (Ehrlichia sennetsu).